Consider the following 122-residue polypeptide: Large ribosomal subunit protein uL24 (122 aa).

It belongs to the universal ribosomal protein uL24 family. As to quaternary structure, part of the 50S ribosomal subunit.

Its function is as follows. One of two assembly initiator proteins, it binds directly to the 5'-end of the 23S rRNA, where it nucleates assembly of the 50S subunit. In terms of biological role, located at the polypeptide exit tunnel on the outside of the subunit. This is Large ribosomal subunit protein uL24 from Methanosarcina mazei (strain ATCC BAA-159 / DSM 3647 / Goe1 / Go1 / JCM 11833 / OCM 88) (Methanosarcina frisia).